The chain runs to 277 residues: Large ribosomal subunit protein uL2 (277 aa).

Disordered stretches follow at residues 1 to 20 (MGIR…SVSD), 27 to 55 (TQPE…RHRG), and 207 to 277 (KAGR…RNQS). The span at 27-48 (TQPEKSLTTYKHSSQGRNNRGV) shows a compositional bias: polar residues. Composition is skewed to basic residues over residues 207-220 (KAGR…RPHV) and 259-277 (TRNR…RNQS).

The protein belongs to the universal ribosomal protein uL2 family. Part of the 50S ribosomal subunit. Forms a bridge to the 30S subunit in the 70S ribosome.

In terms of biological role, one of the primary rRNA binding proteins. Required for association of the 30S and 50S subunits to form the 70S ribosome, for tRNA binding and peptide bond formation. It has been suggested to have peptidyltransferase activity; this is somewhat controversial. Makes several contacts with the 16S rRNA in the 70S ribosome. The chain is Large ribosomal subunit protein uL2 from Gloeothece citriformis (strain PCC 7424) (Cyanothece sp. (strain PCC 7424)).